Consider the following 613-residue polypeptide: Ectonucleoside triphosphate diphosphohydrolase 4 (613 aa).

The Cytoplasmic segment spans residues 1–33; that stretch reads MGRIGISCLFPASWHFSISPVGCPRILNTNLRQ. Residues 34–54 form a helical membrane-spanning segment; it reads IVVISILAAAVSLLYFSVVII. Residues 55–559 lie on the Lumenal side of the membrane; that stretch reads RSKYGWLSKD…AGHAHWRGVS (505 aa). Glu-222 serves as the catalytic Proton acceptor. An intrachain disulfide couples Cys-368 to Cys-395. N-linked (GlcNAc...) asparagine glycosylation is found at Asn-404 and Asn-407. Cys-461 and Cys-490 are joined by a disulfide. Residues 560–580 form a helical membrane-spanning segment; sequence FVYNHYLFSGCFLVVLLSILL. Topologically, residues 581-613 are cytoplasmic; sequence YLLRLRRIHRRAPRTGSLWMEEGLPSQKGPGPL.

Belongs to the GDA1/CD39 NTPase family. Requires Ca(2+) as cofactor. The cofactor is Mg(2+). As to expression, ubiquitous.

The protein resides in the cytoplasmic vesicle. It is found in the autophagosome membrane. It localises to the lysosome membrane. The protein localises to the golgi apparatus membrane. It carries out the reaction a ribonucleoside 5'-triphosphate + H2O = a ribonucleoside 5'-diphosphate + phosphate + H(+). The enzyme catalyses a ribonucleoside 5'-diphosphate + H2O = a ribonucleoside 5'-phosphate + phosphate + H(+). The catalysed reaction is UDP + H2O = UMP + phosphate + H(+). It catalyses the reaction UTP + H2O = UDP + phosphate + H(+). It carries out the reaction CTP + H2O = CDP + phosphate + H(+). The enzyme catalyses GDP + H2O = GMP + phosphate + H(+). The catalysed reaction is 5-methyl-UTP + H2O = 5-methyl-UDP + phosphate + H(+). Functionally, catalyzes the hydrolysis of nucleoside triphosphates and diphosphates in a calcium- or magnesium-dependent manner, with a preference for pyrimidines. Preferentially hydrolyzes UTP and TTP on UTP and TTP. AMP, ADP, ATP and UMP are not substrates. Preferentially activated by Ca(2+) over Mg(2+). Has a broad substrate specificity with the ability of cleaving all nucleotide di- and triphosphates with the exception of adenosine di- and triphosphate (ADP and ATP). Preferentially hydrolyzes CTP, UDP, CDP, GTP and GDP. Can use either Ca(2+) or Mg(2+) equally. This chain is Ectonucleoside triphosphate diphosphohydrolase 4 (Entpd4), found in Mus musculus (Mouse).